Reading from the N-terminus, the 207-residue chain is MTELTKRQSEIYEYIKTVVHTKGYPPSVREIGEAVGLASSSTVHGHLSRLESKGYIRRDPTKPRAIEIVSDQLEENAEMEGTIHVPVIGKVTAGVPITAVENIEEYFPLPEHLTSTHNSDIFILNVVGDSMIEAGILDGDKVIVRSQTIAENGDIIVAMTEDDEATVKRFYKEKHRYRLQPENSTMDPIYLEQVTVLGKVVGLFREL.

Positions 28 to 48 (VREIGEAVGLASSSTVHGHLS) form a DNA-binding region, H-T-H motif. Active-site for autocatalytic cleavage activity residues include Ser-130 and Lys-168.

This sequence belongs to the peptidase S24 family. As to quaternary structure, homodimer.

The enzyme catalyses Hydrolysis of Ala-|-Gly bond in repressor LexA.. Its function is as follows. Represses a number of genes involved in the response to DNA damage (SOS response), including recA and lexA. In the presence of single-stranded DNA, RecA interacts with LexA causing an autocatalytic cleavage which disrupts the DNA-binding part of LexA, leading to derepression of the SOS regulon and eventually DNA repair. The chain is LexA repressor from Staphylococcus carnosus (strain TM300).